Here is a 415-residue protein sequence, read N- to C-terminus: Leucine-rich repeat-containing protein 34 (415 aa).

LRR repeat units lie at residues 246-272 (TLRY…LKSN) and 274-296 (TLEV…LSET).

As to quaternary structure, interacts with NPM1 and NCL.

The protein localises to the nucleus. It is found in the nucleolus. The protein resides in the cytoplasm. Highly expressed in stem cells where it may be involved in regulation of pluripotency. In embryonic stem cells (ESCs), important for normal expression of the pluripotency regulators POU5F1/OCT4 and KLF4. Also important for expression of the ectodermal marker gene NES and the endodermal marker gene GATA4. Promotes stem cell proliferation in vitro. This chain is Leucine-rich repeat-containing protein 34 (Lrrc34), found in Rattus norvegicus (Rat).